Here is a 341-residue protein sequence, read N- to C-terminus: HTH-type transcriptional repressor PurR (341 aa).

One can recognise an HTH lacI-type domain in the interval alanine 2–valine 56. The segment at residues isoleucine 4–asparagine 23 is a DNA-binding region (H-T-H motif). Residues serine 48–valine 56 mediate DNA binding. 5 residues coordinate hypoxanthine: tyrosine 73, arginine 190, threonine 192, phenylalanine 221, and aspartate 275.

As to quaternary structure, homodimer.

It participates in purine metabolism; purine nucleotide biosynthesis [regulation]. Functionally, is the main repressor of the genes involved in the de novo synthesis of purine nucleotides, regulating purB, purC, purEK, purF, purHD, purL, purMN and guaBA expression. PurR is allosterically activated to bind its cognate DNA by binding the purine corepressors, hypoxanthine or guanine, thereby effecting transcription repression. This chain is HTH-type transcriptional repressor PurR, found in Pectobacterium atrosepticum (strain SCRI 1043 / ATCC BAA-672) (Erwinia carotovora subsp. atroseptica).